Here is a 552-residue protein sequence, read N- to C-terminus: Mothers against decapentaplegic homolog 4 (552 aa).

A mediates interaction with ZBTB7A region spans residues 1–322 (MDNMSITNTP…PISNHPAPEY (322 aa)). The MH1 domain maps to 18 to 142 (SIVHSLMCHR…YERVVSPGID (125 aa)). An N6-acetyllysine modification is found at lysine 37. The interval 44 to 69 (VKKLKEKKDELDSLITAITTNGAHPS) is required for interaction with TSC22D1. Cysteine 71 lines the Zn(2+) pocket. Lysine 113 participates in a covalent cross-link: Glycyl lysine isopeptide (Lys-Gly) (interchain with G-Cter in SUMO2). Cysteine 115, cysteine 127, and histidine 132 together coordinate Zn(2+). Disordered stretches follow at residues 168–194 (GQPS…STET) and 236–256 (GLLQ…FTGQ). Composition is skewed to polar residues over residues 170–194 (PSLS…STET) and 245–256 (QPGQQQNGFTGQ). The tract at residues 275 to 320 (PYTPNLPHHQNGHLQHHPPMPPHPGHYWPVHNELAFQPPISNHPAP) is SAD. One can recognise an MH2 domain in the interval 323 to 552 (WCSIAYFEMD…MPIADPQPLD (230 aa)). An N6-acetyllysine mark is found at lysine 428 and lysine 507. A Glycyl lysine isopeptide (Lys-Gly) (interchain with G-Cter in ubiquitin) cross-link involves residue lysine 519.

The protein belongs to the dwarfin/SMAD family. In terms of assembly, monomer; in the absence of TGF-beta activation. Heterotrimer; on TGF-beta activation. Heterotrimer composed of two molecules of a C-terminally phosphorylated R-SMAD molecule, SMAD2 or SMAD3, and one molecule of SMAD4 to form the transcriptional active SMAD2/SMAD3-SMAD4 complex. Found in a ternary complex composed of SMAD4, STK11/LKB1 and STK11IP. Found in a complex with SMAD1 and YY1. Identified in a complex that contains at least ZNF451, SMAD2, SMAD3 and SMAD4. Interacts with ATF2, COPS5, DACH1, MSG1, SKI, STK11/LKB1, STK11IP and TRIM33. Associates with ZNF423 or ZNF521 in response to BMP2 leading to activate transcription of BMP target genes. Interacts with USP9X. Interacts (via the MH1 and MH2 domains) with RBPMS. Interacts with WWTR1 (via coiled-coil domain). Interacts with CITED1 and CITED2. Interacts with PDPK1 (via PH domain). Interacts with VPS39; this interaction affects heterodimer formation with SMAD3, but not with SMAD2, and leads to inhibition of SMAD3-dependent transcription activation. Interactions with VPS39 and SMAD2 may be mutually exclusive. Interacts (via MH2 domain) with ZNF451 (via N-terminal zinc-finger domains). Interacts with ZC3H3. Interacts weakly with ZNF8. Interacts with NUP93 and IPO7; translocates SMAD4 to the nucleus through the NPC upon BMP7 stimulation resulting in activation of SMAD4 signaling. Interacts with CREB3L1, the interaction takes place upon TGFB1 induction and SMAD4 acts as a CREB3L1 coactivator to induce the expression of genes involved in the assembly of collagen extracellular matrix. Interacts with DLX1. Interacts with ZBTB7A; the interaction is direct and stimulated by TGFB1. Interacts with CREBBP; the recruitment of this transcriptional coactivator is negatively regulated by ZBTB7A. Interacts with EP300; the interaction with this transcriptional coactivator is negatively regulated by ZBTB7A. Interacts with HDAC1. Interacts (via MH2 domain) with ZMIZ1 (via SP-RING-type domain); in the TGF-beta signaling pathway increases the activity of the SMAD3/SMAD4 transcriptional complex. Interacts (via N-terminus) with TSC22D1. Phosphorylated by PDPK1. In terms of processing, monoubiquitinated on Lys-519 by E3 ubiquitin-protein ligase TRIM33. Monoubiquitination hampers its ability to form a stable complex with activated SMAD2/3 resulting in inhibition of TGF-beta/BMP signaling cascade. Deubiquitination by USP9X restores its competence to mediate TGF-beta signaling.

It localises to the cytoplasm. The protein localises to the nucleus. Functionally, in muscle physiology, plays a central role in the balance between atrophy and hypertrophy. When recruited by MSTN, promotes atrophy response via phosphorylated SMAD2/4. MSTN decrease causes SMAD4 release and subsequent recruitment by the BMP pathway to promote hypertrophy via phosphorylated SMAD1/5/8. Acts synergistically with SMAD1 and YY1 in bone morphogenetic protein (BMP)-mediated cardiac-specific gene expression. Binds to SMAD binding elements (SBEs) (5'-GTCT/AGAC-3') within BMP response element (BMPRE) of cardiac activating regions. Common SMAD (co-SMAD) is the coactivator and mediator of signal transduction by TGF-beta (transforming growth factor). Component of the heterotrimeric SMAD2/SMAD3-SMAD4 complex that forms in the nucleus and is required for the TGF-mediated signaling. Promotes binding of the SMAD2/SMAD4/FAST-1 complex to DNA and provides an activation function required for SMAD1 or SMAD2 to stimulate transcription. Component of the multimeric SMAD3/SMAD4/JUN/FOS complex which forms at the AP1 promoter site; required for synergistic transcriptional activity in response to TGF-beta. May act as a tumor suppressor. Positively regulates PDPK1 kinase activity by stimulating its dissociation from the 14-3-3 protein YWHAQ which acts as a negative regulator. The chain is Mothers against decapentaplegic homolog 4 (SMAD4) from Homo sapiens (Human).